The chain runs to 1269 residues: MSSSPSPFGQNEWLVEEMYRKFREDPSSVDPSWHEFLVDYNPEPTTDSSASENGQQTRTAAPKAPPEPAPAPAPKTPDSKTPDSKSQAPKQDSKPQESKPQAKAKPAESKSSTKPADAKSEKSGKSGTNGAAKPAAQPADDSDQNQVLRGAAAAVAKNMSASLDVPTATSVRAIPAKLMIDNRVVINNHLKRTRGGKISFTHLIGYAIVAAVKKFPNMNRHFAEVDGKPNAVTPAHTNLGLAIDLQGKDGNRQLVVAAIKKADTMRFGQFIAAYEDIVRRARDGKLTAEDFSGVTISLTNPGTIGTVHSVPRLMRGQGAIIGVGAMEYPAEFQGASEERIADLGIGKLITLTSTYDHRIIQGAESGDFLRTVHQLLLSDDFFDEIFRELGIPYEPVRWRTDNPDSIEDKNARVIELIAAYRNRGHLMADIDPLRLDSNRFRSHPDLDVLTHGLTLWDLDREFKVNGFAGAERKKLRDVLAVLRDAYCRHIGVEYTHILEPEQQQWLQERIEGKHEKPTVAQQKYILSRLNAAEAFETFLQTKYVGQKRFSLEGAETVIPAMDAVIDQCAEHALDEVVIGMPHRGRLNVLANIVGKPYSQIFSEFEGNLNPSQAHGSGDVKYHLGSSGTYLQMFGDNDITVSLTANPSHLEAVDPVMEGLVRAKQDLLDKGDTEDGYTVVPLMLHGDAAFAGQGVVAETLNLALLRGYRTGGTIHLIVNNQIGFTTSPAAAKSSEYCTDVAKMIGAPIFHVNGDDPEAAVWVSRLAVDFRQKFKKDVVIDLLCYRRRGHNEGDDPSMTQPSMYDVIDTKRGVRKSYTEALIGRGDISMKEAEDALRDYQGQLEQVFNEVRELEKHEIEPSESVEADQQIPAKLATAVDKSLLARIGDAHLAVPEGFTVHPRVKPVLEKRREMAYEGKVDWAFAELLALGTMISEGKLVRLSGQDTRRGTFTQRHSVVIDRKTGKEFTPLQLLATDSDGNPTGGKFLVYDSPLSEFAAVGFEYGYSVGNPDAMVLWEAQFGDFINGAQSIIDEFISSGEAKWGQLSDVVLLLPHGHEGQGPDHTSGRIERFLQLWAEGSMTIALPSTPANYFHLLRRHSLDGIQRPLIVFTPKSMLRNKAAVSDIRDFTEQKFRSVLEEPTYTDGDGDRNKVTRILLTSGKIYYELVARKNKESRDDVAIVRIEQLAPLPKRRLAETLDKYPNVEEKFWVQEEPANQGAWPTFGLTLPEMLPDHFTGIKRISRRAMSAPSSGSSKVHAVEQQEILDEAFAP.

Positions M1–N41 are 2-oxoglutarate dehydrogenase E1, N-terminal part. The span at R23–L37 shows a compositional bias: basic and acidic residues. Positions R23–N145 are disordered. The linker stretch occupies residues P42 to A107. The span at E43–R58 shows a compositional bias: polar residues. The segment covering K63 to K75 has biased composition (pro residues). The tract at residues E108–S378 is succinyltransferase E2. Catalysis depends on H357, which acts as the Proton acceptor; for succinyltransferase activity. The segment at D379–P1269 is 2-oxoglutarate dehydrogenase E1, C-terminal part. Position 583 (R583) interacts with thiamine diphosphate. 2 residues coordinate 2-oxoglutarate: H622 and S647. Residues S647, L649, D686, A687, A688, and N719 each coordinate thiamine diphosphate. Position 686 (D686) interacts with Mg(2+). Mg(2+)-binding residues include N719 and I721. Residues D824 to E855 are a coiled coil. Residue H1061 coordinates 2-oxoglutarate. Acetyl-CoA-binding residues include T1079, R1095, K1130, S1133, Q1183, R1190, and R1191.

This sequence belongs to the 2-oxoacid dehydrogenase family. Kgd subfamily. In terms of assembly, homodimer. The 2-oxoglutarate dehydrogenase (ODH) complex contains multiple copies of three enzymatic components: 2-oxoglutarate dehydrogenase (E1), dihydrolipoamide succinyltransferase (E2) and lipoamide dehydrogenase (E3). Requires Mg(2+) as cofactor. It depends on thiamine diphosphate as a cofactor.

It carries out the reaction glyoxylate + 2-oxoglutarate + H(+) = 2-hydroxy-3-oxoadipate + CO2. The enzyme catalyses 2-oxoglutarate + H(+) = succinate semialdehyde + CO2. It catalyses the reaction N(6)-[(R)-lipoyl]-L-lysyl-[protein] + 2-oxoglutarate + H(+) = N(6)-[(R)-S(8)-succinyldihydrolipoyl]-L-lysyl-[protein] + CO2. The catalysed reaction is N(6)-[(R)-dihydrolipoyl]-L-lysyl-[protein] + succinyl-CoA = N(6)-[(R)-S(8)-succinyldihydrolipoyl]-L-lysyl-[protein] + CoA. It functions in the pathway carbohydrate metabolism; tricarboxylic acid cycle; succinate from 2-oxoglutarate (transferase route): step 1/2. The protein operates within carbohydrate metabolism; tricarboxylic acid cycle; succinyl-CoA from 2-oxoglutarate (dehydrogenase route): step 1/1. Alpha-ketoglutarate dehydrogenase and decarboxylase activities are inhibited by unphosphorylated GarA, and allosterically activated by acetyl-CoA, the main substrate of the TCA cycle. Its function is as follows. Shows three enzymatic activities that share a first common step, the attack of thiamine-PP on 2-oxoglutarate (alpha-ketoglutarate, KG), leading to the formation of an enamine-thiamine-PP intermediate upon decarboxylation. Thus, displays KGD activity, catalyzing the decarboxylation from five-carbon 2-oxoglutarate to four-carbon succinate semialdehyde (SSA). Also catalyzes C-C bond formation between the activated aldehyde formed after decarboxylation of alpha-ketoglutarate and the carbonyl of glyoxylate (GLX), to yield 2-hydroxy-3-oxoadipate (HOA), which spontaneously decarboxylates to form 5-hydroxylevulinate (HLA). And is also a component of the 2-oxoglutarate dehydrogenase (ODH) complex, that catalyzes the overall conversion of 2-oxoglutarate to succinyl-CoA and CO(2). The KG decarboxylase and KG dehydrogenase reactions provide two alternative, tightly regulated, pathways connecting the oxidative and reductive branches of the TCA cycle. The sequence is that of Multifunctional 2-oxoglutarate metabolism enzyme (kgd) from Mycobacterium sp. (strain KMS).